Reading from the N-terminus, the 384-residue chain is UDP-N-acetylglucosamine--N-acetylmuramyl-(pentapeptide) pyrophosphoryl-undecaprenol N-acetylglucosamine transferase (384 aa).

UDP-N-acetyl-alpha-D-glucosamine is bound by residues 22–24 (TGG), R179, S209, and Q312.

Belongs to the glycosyltransferase 28 family. MurG subfamily.

The protein localises to the cell inner membrane. The enzyme catalyses di-trans,octa-cis-undecaprenyl diphospho-N-acetyl-alpha-D-muramoyl-L-alanyl-D-glutamyl-meso-2,6-diaminopimeloyl-D-alanyl-D-alanine + UDP-N-acetyl-alpha-D-glucosamine = di-trans,octa-cis-undecaprenyl diphospho-[N-acetyl-alpha-D-glucosaminyl-(1-&gt;4)]-N-acetyl-alpha-D-muramoyl-L-alanyl-D-glutamyl-meso-2,6-diaminopimeloyl-D-alanyl-D-alanine + UDP + H(+). The protein operates within cell wall biogenesis; peptidoglycan biosynthesis. In terms of biological role, cell wall formation. Catalyzes the transfer of a GlcNAc subunit on undecaprenyl-pyrophosphoryl-MurNAc-pentapeptide (lipid intermediate I) to form undecaprenyl-pyrophosphoryl-MurNAc-(pentapeptide)GlcNAc (lipid intermediate II). This chain is UDP-N-acetylglucosamine--N-acetylmuramyl-(pentapeptide) pyrophosphoryl-undecaprenol N-acetylglucosamine transferase, found in Treponema pallidum (strain Nichols).